Consider the following 124-residue polypeptide: Ribonuclease pancreatic (124 aa).

A compositionally biased stretch (basic and acidic residues) spans 1-13 (KESAAAKFERQHM). A disordered region spans residues 1-24 (KESAAAKFERQHMDSSTSSASSSN). K7 and R10 together coordinate substrate. Residue H12 is the Proton acceptor of the active site. Cystine bridges form between C26/C84, C40/C95, C58/C110, and C65/C72. Residues 41–45 (KPVNT), K66, and R85 each bind substrate. The active-site Proton donor is H119.

The protein belongs to the pancreatic ribonuclease family. As to quaternary structure, monomer. Interacts with and forms tight 1:1 complexes with RNH1. Dimerization of two such complexes may occur. Interaction with RNH1 inhibits this protein. As to expression, pancreas.

It is found in the secreted. The catalysed reaction is an [RNA] containing cytidine + H2O = an [RNA]-3'-cytidine-3'-phosphate + a 5'-hydroxy-ribonucleotide-3'-[RNA].. The enzyme catalyses an [RNA] containing uridine + H2O = an [RNA]-3'-uridine-3'-phosphate + a 5'-hydroxy-ribonucleotide-3'-[RNA].. Functionally, endonuclease that catalyzes the cleavage of RNA on the 3' side of pyrimidine nucleotides. Acts on single-stranded and double-stranded RNA. The chain is Ribonuclease pancreatic (RNASE1) from Connochaetes taurinus (Blue wildebeest).